Here is a 669-residue protein sequence, read N- to C-terminus: Hypoxia-inducible factor 3-alpha (669 aa).

Residues 1–27 (MALGLQRARSTTELRKEKSRDAARSRR) are disordered. The segment covering 10-27 (STTELRKEKSRDAARSRR) has biased composition (basic and acidic residues). The region spanning 14–67 (LRKEKSRDAARSRRSQETEVLYQLAHTLPFARGVSAHLDKASIMRLTISYLRMH) is the bHLH domain. A nuclear localization signal region spans residues 77–100 (QVGAGGEPLDACYLKALEGFVMVL). PAS domains lie at 82 to 154 (GEPL…LSRR) and 227 to 297 (PHPG…LSKG). Residues 230 to 274 (GSLEPPLGRGAFLSRHSLDMKFTYCDDRIAEVAGYSPDDLIGCSA) form a nuclear export signal region. Residues 354 to 389 (EQTEQHSRRPIQRGAPSQKDTPNPGDSLDTPGPRIL) are disordered. Positions 414–418 (LRRLL) match the LRRLL motif. Residues 430–444 (TPSTPLATRHPQSPL) show a composition bias toward polar residues. Residues 430-451 (TPSTPLATRHPQSPLSADLPDE) are disordered. Residues 452–581 (LPVGTENVHR…TLAQSSEDED (130 aa)) form an ODD region. Residues 454 to 506 (VGTENVHRLFTSGKDTEAVETDLDIAQDADALDLEMLAPYISMDDDFQLNASE) are NTAD. A Glycyl lysine isopeptide (Lys-Gly) (interchain with G-Cter in ubiquitin) cross-link involves residue Lys-467. Positions 490–497 (LAPYISMD) match the LAPYISMD motif. At Pro-492 the chain carries 4-hydroxyproline. Disordered regions lie at residues 523-600 (RARS…SPEH) and 619-669 (APGS…AQAD). 2 stretches are compositionally biased toward low complexity: residues 530–541 (LSPPALEPSLLP) and 550–564 (SCSSPSRGDPSASSP). A Glycyl lysine isopeptide (Lys-Gly) (interchain with G-Cter in ubiquitin) cross-link involves residue Lys-570. Positions 629-646 (PLLNLNEPLGLGPSLLSP) are enriched in low complexity.

As to quaternary structure, isoform 2 interacts (via ODD domain) with VHL (via beta domain). Isoform 4 interacts with HIF1A; the interaction inhibits the binding of HIF1A to hypoxia-responsive element (HRE) and HIF1A/ARNT-dependent transcriptional activation. Isoform 4 interacts with ARNT; the interaction occurs in a HIF1A- and DNA-binding-independent manner and does not induce HIF1A/ARNT-dependent transcriptional activation. Isoform 4 interacts with EPAS1. Interacts with BAD, BCL2L2 and MCL1. In terms of processing, in normoxia, hydroxylated on Pro-492 in the oxygen-dependent degradation domain (ODD) by prolyl hydroxylase(s) (PHD). The hydroxylated proline promotes interaction with VHL, initiating rapid ubiquitination and subsequent proteasomal degradation. Post-translationally, ubiquitinated; ubiquitination occurs in a VHL- and oxygen-dependent pathway and subsequently targeted for proteasomal degradation. As to expression, expressed in vascular cells (at protein level). Expressed in kidney. Expressed in lung epithelial cells. Expressed in endothelial cells (venous and arterial cells from umbilical cord and aortic endothelial cells) and in vascular smooth muscle cells (aorta). Strongly expressed in the heart, placenta, and skeletal muscle, whereas a weak expression profile was found in the lung, liver, and kidney. Expressed weakly in cell renal cell carcinoma (CC-RCC) compared to normal renal cells. Expression is down-regulated in numerous kidney tumor cells compared to non tumor kidney tissues. Isoform 2 is expressed in heart, placenta, lung, liver, skeletal muscle and pancreas and in numerous cancer cell lines. Isoform 3 and isoform 4 are weakly expressed in heart, placenta, lung, liver, skeletal muscle and pancreas. Isoform 4 is expressed in fetal tissues, such as heart, brain, thymus, lung, liver, skeletal kidney and spleen. Isoform 3 is weakly expressed in fetal tissues, such as liver and kidney.

It is found in the nucleus. The protein localises to the cytoplasm. It localises to the nucleus speckle. The protein resides in the mitochondrion. Acts as a transcriptional regulator in adaptive response to low oxygen tension. Acts as a regulator of hypoxia-inducible gene expression. Functions as an inhibitor of angiogenesis in hypoxic cells of the cornea. Plays a role in the development of the cardiorespiratory system. May also be involved in apoptosis. Its function is as follows. Attenuates the ability of transcription factor HIF1A to bind to hypoxia-responsive elements (HRE) located within the enhancer/promoter of hypoxia-inducible target genes and hence inhibits HRE-driven transcriptional activation. Also inhibits hypoxia-inducible ARNT-mediated gene expression. In terms of biological role, attenuates the ability of transcription factor HIF1A to bind to hypoxia-responsive elements (HRE) located within the enhancer/promoter of hypoxia-inducible target genes and hence inhibits HRE-driven transcriptional activation. Functionally, attenuates the ability of transcription factor HIF1A and EPAS1/HIF2A to bind to hypoxia-responsive elements (HRE) located within the enhancer/promoter of hypoxia-inducible target genes and hence inhibits HRE-driven transcriptional activation. May act as a tumor suppressor and inhibits malignant cell transformation. The polypeptide is Hypoxia-inducible factor 3-alpha (Homo sapiens (Human)).